The chain runs to 502 residues: ATP synthase subunit alpha (502 aa).

169 to 176 (GDRQTGKT) is a binding site for ATP.

The protein belongs to the ATPase alpha/beta chains family. As to quaternary structure, F-type ATPases have 2 components, CF(1) - the catalytic core - and CF(0) - the membrane proton channel. CF(1) has five subunits: alpha(3), beta(3), gamma(1), delta(1), epsilon(1). CF(0) has three main subunits: a(1), b(2) and c(9-12). The alpha and beta chains form an alternating ring which encloses part of the gamma chain. CF(1) is attached to CF(0) by a central stalk formed by the gamma and epsilon chains, while a peripheral stalk is formed by the delta and b chains.

Its subcellular location is the cell membrane. The enzyme catalyses ATP + H2O + 4 H(+)(in) = ADP + phosphate + 5 H(+)(out). Produces ATP from ADP in the presence of a proton gradient across the membrane. The alpha chain is a regulatory subunit. The sequence is that of ATP synthase subunit alpha from Clostridium perfringens (strain SM101 / Type A).